The chain runs to 239 residues: MIENQSDNIDIKENDVLNQDNAPEDNSSAAEKTIENDELSPQKTEEINTEELKNTISNNDARLEQLEKEHETLKNQYVRISADFDNFRKRQSRDQDDLKVQLVSKTLTAILPIVDNFERARQQLKPESEEAQALHRSYQGLYKQLVEVLKQQGVSPMRVVGQQFDPNLHEAVLREPSEEFKEDLIVEELQRGYHLEGKVLRHALVKVSMGHGQQNSQEEVEKDTVEEDIDSEENTSEDV.

2 disordered regions span residues M1–E50 and M209–V239. A compositionally biased stretch (polar residues) spans V16 to A30. Acidic residues predominate over residues E218–V239.

Belongs to the GrpE family. As to quaternary structure, homodimer.

The protein localises to the cytoplasm. Its function is as follows. Participates actively in the response to hyperosmotic and heat shock by preventing the aggregation of stress-denatured proteins, in association with DnaK and GrpE. It is the nucleotide exchange factor for DnaK and may function as a thermosensor. Unfolded proteins bind initially to DnaJ; upon interaction with the DnaJ-bound protein, DnaK hydrolyzes its bound ATP, resulting in the formation of a stable complex. GrpE releases ADP from DnaK; ATP binding to DnaK triggers the release of the substrate protein, thus completing the reaction cycle. Several rounds of ATP-dependent interactions between DnaJ, DnaK and GrpE are required for fully efficient folding. The polypeptide is Protein GrpE (Prochlorococcus marinus (strain MIT 9312)).